Consider the following 599-residue polypeptide: PR domain zinc finger protein 5 (599 aa).

The SET domain occupies 8–124 (DRFALKSSRV…TDTELLIGYL (117 aa)). 12 consecutive C2H2-type zinc fingers follow at residues 167-190 (FACP…QSLH), 199-221 (FKCE…FEQH), 231-256 (FVCK…ENVH), 264-286 (LICS…RKIH), 289-311 (FDCQ…MITH), 317-339 (YNCE…KVIH), 345-367 (YQCK…KKTH), 373-395 (FQCD…LLIH), 401-424 (FKCH…QVVH), 430-452 (YRCE…KKTH), 458-480 (KVCP…IRSH), and 486-508 (YQCP…IRTH). The C2H2-type 13; degenerate zinc-finger motif lies at 514–536 (YQCSECSKAFSQKRGLDEHKRTH). 2 C2H2-type zinc fingers span residues 542 to 564 (FQCD…KMTH) and 571 to 594 (AECH…DNIH).

It belongs to the class V-like SAM-binding methyltransferase superfamily. As to quaternary structure, interacts with EHMT2/G9A, GFI1 and HDAC1.

Its subcellular location is the nucleus. Its function is as follows. Sequence-specific DNA-binding transcription factor. Represses transcription at least in part by recruitment of the histone methyltransferase EHMT2/G9A and histone deacetylases such as HDAC1. Regulates hematopoiesis-associated protein-coding and microRNA (miRNA) genes. May regulate the expression of proteins involved in extracellular matrix development and maintenance, connective tissue components and molecules regulating cell migration and adhesion. May cause G2/M arrest and apoptosis in cancer cells. The polypeptide is PR domain zinc finger protein 5 (Prdm5) (Mus musculus (Mouse)).